The following is a 231-amino-acid chain: 3-oxoadipate CoA-transferase subunit A (231 aa).

25–31 (GGFGTAG) serves as a coordination point for CoA.

The protein belongs to the 3-oxoacid CoA-transferase subunit A family. In terms of assembly, heterodimer.

The catalysed reaction is 3-oxoadipate + succinyl-CoA = 3-oxoadipyl-CoA + succinate. It participates in aromatic compound metabolism; beta-ketoadipate pathway; acetyl-CoA and succinyl-CoA from 3-oxoadipate: step 1/2. The protein is 3-oxoadipate CoA-transferase subunit A (pcaI) of Pseudomonas putida (Arthrobacter siderocapsulatus).